The primary structure comprises 224 residues: ATP-dependent dethiobiotin synthetase BioD (224 aa).

Threonine 18 contributes to the Mg(2+) binding site. Lysine 39 is a catalytic residue. Substrate is bound at residue serine 43. 2 residues coordinate Mg(2+): aspartate 56 and glutamate 117. Residues aspartate 56, 117–120 (EGVG), and 177–178 (NE) contribute to the ATP site.

This sequence belongs to the dethiobiotin synthetase family. In terms of assembly, homodimer. Mg(2+) serves as cofactor.

Its subcellular location is the cytoplasm. It carries out the reaction (7R,8S)-7,8-diammoniononanoate + CO2 + ATP = (4R,5S)-dethiobiotin + ADP + phosphate + 3 H(+). It participates in cofactor biosynthesis; biotin biosynthesis; biotin from 7,8-diaminononanoate: step 1/2. Functionally, catalyzes a mechanistically unusual reaction, the ATP-dependent insertion of CO2 between the N7 and N8 nitrogen atoms of 7,8-diaminopelargonic acid (DAPA, also called 7,8-diammoniononanoate) to form a ureido ring. In Xanthomonas oryzae pv. oryzae (strain MAFF 311018), this protein is ATP-dependent dethiobiotin synthetase BioD.